The primary structure comprises 431 residues: Mitochondrial distribution and morphology protein 12 (431 aa).

The 431-residue stretch at 1–431 (MSIDLNWETL…VYPSFWTFLV (431 aa)) folds into the SMP-LTD domain. Disordered regions lie at residues 68–153 (DFYE…GVST) and 209–289 (QSHT…PKPE). Positions 69–96 (FYEDLDDDDGGSDEDDEGSNSCQTDEEN) are enriched in acidic residues. Residues 97-113 (EAAKTLRERRKMDRVER) show a composition bias toward basic and acidic residues. A compositionally biased stretch (polar residues) spans 115–129 (ANGSSNVSNPPSYTD). A compositionally biased stretch (low complexity) spans 241-252 (SASTLAVSSSTT).

Belongs to the MDM12 family. Component of the ER-mitochondria encounter structure (ERMES) or MDM complex, composed of mmm1, mdm10, mdm12 and mdm34. A mmm1 homodimer associates with one molecule of mdm12 on each side in a pairwise head-to-tail manner, and the SMP-LTD domains of mmm1 and mdm12 generate a continuous hydrophobic tunnel for phospholipid trafficking.

It localises to the mitochondrion outer membrane. Its subcellular location is the endoplasmic reticulum membrane. In terms of biological role, component of the ERMES/MDM complex, which serves as a molecular tether to connect the endoplasmic reticulum (ER) and mitochondria. Components of this complex are involved in the control of mitochondrial shape and protein biogenesis, and function in nonvesicular lipid trafficking between the ER and mitochondria. Mdm12 is required for the interaction of the ER-resident membrane protein mmm1 and the outer mitochondrial membrane-resident beta-barrel protein mdm10. The mdm12-mmm1 subcomplex functions in the major beta-barrel assembly pathway that is responsible for biogenesis of all mitochondrial outer membrane beta-barrel proteins, and acts in a late step after the SAM complex. The mdm10-mdm12-mmm1 subcomplex further acts in the TOM40-specific pathway after the action of the mdm12-mmm1 complex. Essential for establishing and maintaining the structure of mitochondria and maintenance of mtDNA nucleoids. This Sclerotinia sclerotiorum (strain ATCC 18683 / 1980 / Ss-1) (White mold) protein is Mitochondrial distribution and morphology protein 12.